The following is a 156-amino-acid chain: Small ribosomal subunit protein uS7 (156 aa).

This sequence belongs to the universal ribosomal protein uS7 family. As to quaternary structure, part of the 30S ribosomal subunit. Contacts proteins S9 and S11.

In terms of biological role, one of the primary rRNA binding proteins, it binds directly to 16S rRNA where it nucleates assembly of the head domain of the 30S subunit. Is located at the subunit interface close to the decoding center, probably blocks exit of the E-site tRNA. The polypeptide is Small ribosomal subunit protein uS7 (Bradyrhizobium sp. (strain BTAi1 / ATCC BAA-1182)).